A 378-amino-acid chain; its full sequence is Transmembrane protein adipocyte-associated 1 homolog (378 aa).

N-linked (GlcNAc...) asparagine glycosylation is found at N16, N25, and N36. A run of 7 helical transmembrane segments spans residues 61 to 81, 88 to 108, 136 to 156, 164 to 184, 205 to 225, 247 to 267, and 278 to 298; these read VMLL…LPSA, TSSP…AVGI, FFLL…GHLE, VLAI…TLEI, HFWL…VILP, ILAL…ADII, and FLYF…GFFG. The interval 316 to 335 is disordered; it reads DSDVHLPHTSSSGLGRKDLD.

It belongs to the UPF0359 family.

It localises to the membrane. This Danio rerio (Zebrafish) protein is Transmembrane protein adipocyte-associated 1 homolog (tpra1).